Here is a 377-residue protein sequence, read N- to C-terminus: MNPQIRNMVEQMEPDIFVYYFNNRPILSGRNTVWLCYEVKTKDPSGPPLDANIFQGKLYPEAKDHPEMKFLHWFRKWRQLHRDQEYEVTWYVSWSPCTRCANSVATFLAEDPKVTLTIFVARLYYFWKPDYQQALRILCQERGGPHATMKIMNYNEFQHCWNEFVDGQGKPFKPRKNLPKHYTLLHATLGELLRHVMDPGTFTSNFNNKPWVSGQRETYLCYKVERSHNDTWVLLNQHRGFLRNQAPDRHGFPKGRHAELCFLDLIPFWKLDDQQYRVTCFTSWSPCFSCAQKMAKFISNNKHVSLCIFAARIYDDQGRCQEGLRTLHRDGAKIAVMNYSEFEYCWDTFVDRQGRPFQPWDGLDEHSQALSGRLRAI.

An essential for cytoplasmic localization region spans residues 1 to 60 (MNPQIRNMVEQMEPDIFVYYFNNRPILSGRNTVWLCYEVKTKDPSGPPLDANIFQGKLYP). CMP/dCMP-type deaminase domains are found at residues 29–138 (GRNT…LRIL) and 214–327 (GQRE…LRTL). A Phosphothreonine; by PKA modification is found at T32. Zn(2+) contacts are provided by H65, C97, and C100. The segment at 209–335 (KPWVSGQRET…TLHRDGAKIA (127 aa)) is necessary for homooligomerization. The interaction with DNA stretch occupies residues 213 to 215 (SGQ). Residue T218 is modified to Phosphothreonine; by PKA and CAMK2. H257 contributes to the Zn(2+) binding site. E259 functions as the Proton donor in the catalytic mechanism. Zn(2+) contacts are provided by C287 and C290. The interval 312–319 (RIYDDQGR) is interaction with DNA.

The protein belongs to the cytidine and deoxycytidylate deaminase family. Homodimer. Homooligomer. Can bind RNA to form ribonucleoprotein complexes of high-molecular-mass (HMM) or low-molecular-mass (LMM). HMM is inactive and heterogeneous in protein composition because of binding nonselectively to cellular RNAs, which in turn are associated with variety of cellular proteins. The LMM form which is enzymatically active has few or no RNAs associated. Its ability to form homooligomer is distinct from its ability to assemble into HMM. Interacts with APOBEC3B, APOBEC3F, MOV10, AGO2, EIF4E, EIF4ENIF1, DCP2 and DDX6 in an RNA-dependent manner. Interacts with AGO1, AGO3 and PKA/PRKACA. Zn(2+) is required as a cofactor.

The protein resides in the cytoplasm. It is found in the nucleus. It localises to the P-body. It catalyses the reaction a 2'-deoxycytidine in single-stranded DNA + H2O + H(+) = a 2'-deoxyuridine in single-stranded DNA + NH4(+). In terms of biological role, DNA deaminase (cytidine deaminase) which acts as an inhibitor of retrovirus replication and retrotransposon mobility via deaminase-dependent and -independent mechanisms. Exhibits antiviral activity against vif-deficient: HIV-1 and simian immunodeficiency viruses (SIVs) and also simian foamy virus (SFV). After the penetration of retroviral nucleocapsids into target cells of infection and the initiation of reverse transcription, it can induce the conversion of cytosine to uracil in the minus-sense single-strand viral DNA, leading to G-to-A hypermutations in the subsequent plus-strand viral DNA. The resultant detrimental levels of mutations in the proviral genome, along with a deamination-independent mechanism that works prior to the proviral integration, together exert efficient antiretroviral effects in infected target cells. Selectively targets single-stranded DNA and does not deaminate double-stranded DNA or single- or double-stranded RNA. May inhibit the mobility of LTR retrotransposons. The polypeptide is DNA dC-&gt;dU-editing enzyme APOBEC-3G (APOBEC3G) (Chlorocebus aethiops (Green monkey)).